A 366-amino-acid chain; its full sequence is Beta sliding clamp (366 aa).

The interval 1–125 (MKFTVEREHL…FPNLDDWQSE (125 aa)) is i. The II stretch occupies residues 126-253 (VEFTLPQATM…YRRVLPKNPD (128 aa)). The interval 254 to 366 (KHLEAGCDLL…AAYVVMPMRL (113 aa)) is III.

The protein belongs to the beta sliding clamp family. In terms of assembly, forms a ring-shaped head-to-tail homodimer around DNA which binds and tethers DNA polymerases and other proteins to the DNA. The DNA replisome complex has a single clamp-loading complex (3 tau and 1 each of delta, delta', psi and chi subunits) which binds 3 Pol III cores (1 core on the leading strand and 2 on the lagging strand) each with a beta sliding clamp dimer. Additional proteins in the replisome are other copies of gamma, psi and chi, Ssb, DNA helicase and RNA primase.

Its subcellular location is the cytoplasm. Confers DNA tethering and processivity to DNA polymerases and other proteins. Acts as a clamp, forming a ring around DNA (a reaction catalyzed by the clamp-loading complex) which diffuses in an ATP-independent manner freely and bidirectionally along dsDNA. Initially characterized for its ability to contact the catalytic subunit of DNA polymerase III (Pol III), a complex, multichain enzyme responsible for most of the replicative synthesis in bacteria; Pol III exhibits 3'-5' exonuclease proofreading activity. The beta chain is required for initiation of replication as well as for processivity of DNA replication. The polypeptide is Beta sliding clamp (dnaN) (Escherichia coli O157:H7).